The chain runs to 1480 residues: Heme-responsive zinc finger transcription factor HAP1 (1480 aa).

A compositionally biased stretch (polar residues) spans methionine 1–serine 50. Positions methionine 1–lysine 56 are disordered. Positions 64, 67, 74, 81, 84, and 93 each coordinate Zn(2+). The segment at residues cysteine 64–cysteine 93 is a DNA-binding region (zn(2)-C6 fungal-type). The stretch at glutamate 105–serine 134 forms a coiled coil. The interval lysine 126–asparagine 208 is disordered. Over residues lysine 130 to serine 142 the composition is skewed to low complexity. Polar residues-rich tracts occupy residues tyrosine 143–phenylalanine 152 and threonine 160–histidine 176. A compositionally biased stretch (low complexity) spans glutamine 177–asparagine 208. Residues lysine 244–serine 441 are heme-responsive; required for HMC formation. 6 HRM repeats span residues lysine 280–histidine 285, lysine 296–histidine 301, lysine 320–histidine 325, arginine 344–histidine 349, lysine 386–histidine 391, and arginine 412–histidine 417. Polar residues-rich tracts occupy residues serine 429–histidine 444 and glutamine 703–leucine 731. Disordered regions lie at residues serine 429–aspartate 456 and glutamine 703–glutamine 764. Over residues asparagine 732–asparagine 756 the composition is skewed to low complexity. The stretch at lysine 1189–glutamine 1194 is one HRM 7 repeat. The disordered stretch occupies residues threonine 1381–serine 1408. Residues aspartate 1385–serine 1408 are compositionally biased toward polar residues.

In terms of assembly, binds DNA as a homodimer. Interacts with SRO9 and YDJ1. In the absence of heme, binds to at least four cellular proteins, including YDJ1 and SRO9, forming a high-molecular-weight complex (HMC) which results in repression of its activity and dictates its DNA-binding specificity.

Its subcellular location is the nucleus. In terms of biological role, regulation of oxygen dependent gene expression. It modulates the expression of Iso-1 (CYP1) and Iso-2 (CYP3) cytochrome c. In response to heme, promotes transcription of genes encoding functions required for respiration, controlling oxidative damage and repression of anaerobic genes. Binds to the sequence 5'-CGGNNNTNNCGG-3'. Is non-functional in terms of iso-1 cytochrome c expression in strain S288c and its derivatives. The protein is Heme-responsive zinc finger transcription factor HAP1 (HAP1) of Saccharomyces cerevisiae (strain Kyokai no. 7 / NBRC 101557) (Baker's yeast).